Reading from the N-terminus, the 405-residue chain is Multifunctional CCA protein (405 aa).

Positions 8 and 11 each coordinate ATP. 2 residues coordinate CTP: G8 and R11. 2 residues coordinate Mg(2+): D21 and D23. R91, R137, and R140 together coordinate ATP. R91, R137, and R140 together coordinate CTP. In terms of domain architecture, HD spans 225 to 326 (TGVHAMLVLD…LRLLRECDAL (102 aa)).

The protein belongs to the tRNA nucleotidyltransferase/poly(A) polymerase family. Bacterial CCA-adding enzyme type 1 subfamily. In terms of assembly, monomer. Can also form homodimers and oligomers. Mg(2+) serves as cofactor. It depends on Ni(2+) as a cofactor.

It catalyses the reaction a tRNA precursor + 2 CTP + ATP = a tRNA with a 3' CCA end + 3 diphosphate. The enzyme catalyses a tRNA with a 3' CCA end + 2 CTP + ATP = a tRNA with a 3' CCACCA end + 3 diphosphate. Its function is as follows. Catalyzes the addition and repair of the essential 3'-terminal CCA sequence in tRNAs without using a nucleic acid template. Adds these three nucleotides in the order of C, C, and A to the tRNA nucleotide-73, using CTP and ATP as substrates and producing inorganic pyrophosphate. tRNA 3'-terminal CCA addition is required both for tRNA processing and repair. Also involved in tRNA surveillance by mediating tandem CCA addition to generate a CCACCA at the 3' terminus of unstable tRNAs. While stable tRNAs receive only 3'-terminal CCA, unstable tRNAs are marked with CCACCA and rapidly degraded. The polypeptide is Multifunctional CCA protein (Laribacter hongkongensis (strain HLHK9)).